A 150-amino-acid polypeptide reads, in one-letter code: Large ribosomal subunit protein uL11 (150 aa).

The tract at residues 83-111 (AAGLKPQGKRNRAKGSEKPGRQTAGTVTA) is disordered.

The protein belongs to the universal ribosomal protein uL11 family. As to quaternary structure, part of the ribosomal stalk of the 50S ribosomal subunit. Interacts with L10 and the large rRNA to form the base of the stalk. L10 forms an elongated spine to which L12 dimers bind in a sequential fashion forming a multimeric L10(L12)X complex. One or more lysine residues are methylated.

In terms of biological role, forms part of the ribosomal stalk which helps the ribosome interact with GTP-bound translation factors. The protein is Large ribosomal subunit protein uL11 of Paracoccus denitrificans (strain Pd 1222).